The chain runs to 201 residues: Small ribosomal subunit protein uS4c (201 aa).

The interval 23–42 (SKKPRAGSNLRNQLRPGKKS) is disordered. One can recognise an S4 RNA-binding domain in the interval 89–151 (MRLDNILFRL…QKSKSLVQNY (63 aa)).

It belongs to the universal ribosomal protein uS4 family. As to quaternary structure, part of the 30S ribosomal subunit. Contacts protein S5. The interaction surface between S4 and S5 is involved in control of translational fidelity.

It localises to the plastid. The protein resides in the chloroplast. In terms of biological role, one of the primary rRNA binding proteins, it binds directly to 16S rRNA where it nucleates assembly of the body of the 30S subunit. Its function is as follows. With S5 and S12 plays an important role in translational accuracy. The polypeptide is Small ribosomal subunit protein uS4c (rps4) (Morus indica (Mulberry)).